The chain runs to 286 residues: tRNA (guanine-N(7)-)-methyltransferase (286 aa).

Residues Met1–Glu21 form a disordered region. S-adenosyl-L-methionine-binding residues include Glu91, Glu116, Asn143, and Asp165. Asp165 is an active-site residue. Substrate contacts are provided by residues Lys169, Asp201, and Thr262 to Glu265.

Belongs to the class I-like SAM-binding methyltransferase superfamily. TrmB family.

It catalyses the reaction guanosine(46) in tRNA + S-adenosyl-L-methionine = N(7)-methylguanosine(46) in tRNA + S-adenosyl-L-homocysteine. It participates in tRNA modification; N(7)-methylguanine-tRNA biosynthesis. In terms of biological role, catalyzes the formation of N(7)-methylguanine at position 46 (m7G46) in tRNA. This is tRNA (guanine-N(7)-)-methyltransferase from Bifidobacterium longum (strain NCC 2705).